The chain runs to 800 residues: Phenylalanine--tRNA ligase beta subunit (800 aa).

Positions 39 to 154 (TKDIKNLVVG…ESQVPGTDAL (116 aa)) constitute a tRNA-binding domain. A B5 domain is found at 408–483 (AFITPIDITA…RIYGYDDIPS (76 aa)). Residues Asp-461, Asp-467, Glu-470, and Glu-471 each coordinate Mg(2+). The region spanning 708–800 (PRFPGMSRDI…ALIEQGAVIR (93 aa)) is the FDX-ACB domain.

The protein belongs to the phenylalanyl-tRNA synthetase beta subunit family. Type 1 subfamily. Tetramer of two alpha and two beta subunits. Mg(2+) serves as cofactor.

It localises to the cytoplasm. The enzyme catalyses tRNA(Phe) + L-phenylalanine + ATP = L-phenylalanyl-tRNA(Phe) + AMP + diphosphate + H(+). This is Phenylalanine--tRNA ligase beta subunit from Staphylococcus aureus (strain MSSA476).